Consider the following 473-residue polypeptide: MAIITEEEEDPKTLNPPKNKPKDSDFTKSESTMKNPKPQSQNPFPFWFYFTVVVSLATIIFISLSLFSSQNDPRSWFLSLPPALRQHYSNGRTIKVQVNSNESPIEVFVAESGSIHTETVVIVHGLGLSSFAFKEMIQSLGSKGIHSVAIDLPGNGFSDKSMVVIGGDREIGFVARVKEVYGLIQEKGVFWAFDQMIETGDLPYEEIIKLQNSKRRSFKAIELGSEETARVLGQVIDTLGLAPVHLVLHDSALGLASNWVSENWQSVRSVTLIDSSISPALPLWVLNVPGIREILLAFSFGFEKLVSFRCSKEMTLSDIDAHRILLKGRNGREAVVASLNKLNHSFDIAQWGNSDGINGIPMQVIWSSEASKEWSDEGQRVAKALPKAKFVTHSGSRWPQESKSGELADYISEFVSLLPKSIRRVAEEPIPEEVQKVLEEAKAGDDHDHHHGHGHAHAGYSDAYGLGEEWTTT.

A compositionally biased stretch (acidic residues) spans 1-10; that stretch reads MAIITEEEED. Positions 1-38 are disordered; sequence MAIITEEEEDPKTLNPPKNKPKDSDFTKSESTMKNPKP. Residues 29-38 show a composition bias toward polar residues; that stretch reads SESTMKNPKP. Residues 44 to 64 traverse the membrane as a helical segment; that stretch reads FPFWFYFTVVVSLATIIFISL. An AB hydrolase-1 domain is found at 119 to 283; it reads TVVIVHGLGL…DSSISPALPL (165 aa).

In terms of tissue distribution, most abundant in root tissue, lesser amounts in rosette leaves, stems and flowers and very little in mature siliques.

The protein resides in the endoplasmic reticulum membrane. Required for the auxin influx facilitator AUX1 polar trafficking and its asymmetric localization within the plasma membrane. Not involved in the PIN proteins localization. The chain is Protein AUXIN RESPONSE 4 (AXR4) from Arabidopsis thaliana (Mouse-ear cress).